The primary structure comprises 447 residues: Sensor protein VanSB (447 aa).

Helical transmembrane passes span 10–30 (VFSY…TLFA) and 137–155 (GIVM…AYIF). An HAMP domain is found at 157-208 (RQMTTPIKALADSANKMANLKEVPPPLERKDELGALAHDMHSMYIRLKETIA). A Histidine kinase domain is found at 230–445 (AASHELKTPI…LFWLDLPPTS (216 aa)). His-233 carries the post-translational modification Phosphohistidine; by autocatalysis.

It localises to the cell membrane. It catalyses the reaction ATP + protein L-histidine = ADP + protein N-phospho-L-histidine.. Functionally, member of the two-component regulatory system VanSB/VanRB. Activates the transcription of vanSB, vanYB and vanW in response to vancomycin which results in vancomycin resistance. VanSB may activate VanRB by phosphorylation. May also act as a phospho-VanRB phosphatase. The protein is Sensor protein VanSB (vanSB) of Enterococcus faecalis (strain ATCC 700802 / V583).